Consider the following 366-residue polypeptide: Adenosine deaminase (366 aa).

Zn(2+) contacts are provided by His19 and His21. Substrate contacts are provided by His21, Asp23, and Gly181. His208 contributes to the Zn(2+) binding site. Glu211 acts as the Proton donor in catalysis. Asp304 contributes to the Zn(2+) binding site.

This sequence belongs to the metallo-dependent hydrolases superfamily. Adenosine and AMP deaminases family. Adenosine deaminase subfamily. Requires Zn(2+) as cofactor.

It catalyses the reaction adenosine + H2O + H(+) = inosine + NH4(+). The enzyme catalyses 2'-deoxyadenosine + H2O + H(+) = 2'-deoxyinosine + NH4(+). Its function is as follows. Catalyzes the hydrolytic deamination of adenosine and 2-deoxyadenosine. This Mycobacterium avium (strain 104) protein is Adenosine deaminase.